A 109-amino-acid polypeptide reads, in one-letter code: Thiosulfate sulfurtransferase GlpE (109 aa).

Positions 17–105 constitute a Rhodanese domain; that stretch reads HQQTAVLVDI…WHRHFPAEVA (89 aa). Cys-65 (cysteine persulfide intermediate) is an active-site residue.

This sequence belongs to the GlpE family.

The protein resides in the cytoplasm. The catalysed reaction is thiosulfate + hydrogen cyanide = thiocyanate + sulfite + 2 H(+). It catalyses the reaction thiosulfate + [thioredoxin]-dithiol = [thioredoxin]-disulfide + hydrogen sulfide + sulfite + 2 H(+). Its function is as follows. Transferase that catalyzes the transfer of sulfur from thiosulfate to thiophilic acceptors such as cyanide or dithiols. May function in a CysM-independent thiosulfate assimilation pathway by catalyzing the conversion of thiosulfate to sulfite, which can then be used for L-cysteine biosynthesis. The protein is Thiosulfate sulfurtransferase GlpE of Klebsiella pneumoniae subsp. pneumoniae (strain ATCC 700721 / MGH 78578).